We begin with the raw amino-acid sequence, 591 residues long: Aspartate--tRNA(Asp/Asn) ligase (591 aa).

Glutamate 170 provides a ligand contact to L-aspartate. Residues 194-197 form an aspartate region; that stretch reads QLFK. Arginine 216 lines the L-aspartate pocket. Residues 216–218 and glutamine 225 contribute to the ATP site; that span reads RDE. L-aspartate is bound at residue histidine 448. Glutamate 482 contacts ATP. Position 489 (arginine 489) interacts with L-aspartate. An ATP-binding site is contributed by 534 to 537; that stretch reads GWDR. The disordered stretch occupies residues 559 to 591; sequence GGVDPLTDAPAPITEQQRKESGIDVKPEPSKPH. Basic and acidic residues predominate over residues 574 to 591; it reads QQRKESGIDVKPEPSKPH.

This sequence belongs to the class-II aminoacyl-tRNA synthetase family. Type 1 subfamily. As to quaternary structure, homodimer.

The protein resides in the cytoplasm. The catalysed reaction is tRNA(Asx) + L-aspartate + ATP = L-aspartyl-tRNA(Asx) + AMP + diphosphate. Functionally, aspartyl-tRNA synthetase with relaxed tRNA specificity since it is able to aspartylate not only its cognate tRNA(Asp) but also tRNA(Asn). Reaction proceeds in two steps: L-aspartate is first activated by ATP to form Asp-AMP and then transferred to the acceptor end of tRNA(Asp/Asn). In Mycobacterium avium (strain 104), this protein is Aspartate--tRNA(Asp/Asn) ligase.